The chain runs to 160 residues: Cytochrome b6-f complex subunit 4 (160 aa).

3 helical membrane passes run 36-56, 95-115, and 131-151; these read LLYVFPIVIMGSFACIVALAV, LLGVLAMASVPLGLILVPFIE, and TVFLFGTLVTLWLGIGAALPL.

Belongs to the cytochrome b family. PetD subfamily. In terms of assembly, the 4 large subunits of the cytochrome b6-f complex are cytochrome b6, subunit IV (17 kDa polypeptide, PetD), cytochrome f and the Rieske protein, while the 4 small subunits are PetG, PetL, PetM and PetN. The complex functions as a dimer.

Its subcellular location is the cellular thylakoid membrane. Its function is as follows. Component of the cytochrome b6-f complex, which mediates electron transfer between photosystem II (PSII) and photosystem I (PSI), cyclic electron flow around PSI, and state transitions. The chain is Cytochrome b6-f complex subunit 4 from Trichormus variabilis (strain ATCC 29413 / PCC 7937) (Anabaena variabilis).